We begin with the raw amino-acid sequence, 507 residues long: Histidine ammonia-lyase (507 aa).

The segment at residues 141 to 143 is a cross-link (5-imidazolinone (Ala-Gly)); that stretch reads ASG. Ser142 carries the post-translational modification 2,3-didehydroalanine (Ser).

Belongs to the PAL/histidase family. In terms of processing, contains an active site 4-methylidene-imidazol-5-one (MIO), which is formed autocatalytically by cyclization and dehydration of residues Ala-Ser-Gly.

It localises to the cytoplasm. The enzyme catalyses L-histidine = trans-urocanate + NH4(+). Its pathway is amino-acid degradation; L-histidine degradation into L-glutamate; N-formimidoyl-L-glutamate from L-histidine: step 1/3. This chain is Histidine ammonia-lyase, found in Natranaerobius thermophilus (strain ATCC BAA-1301 / DSM 18059 / JW/NM-WN-LF).